The chain runs to 207 residues: Dephospho-CoA kinase (207 aa).

Positions 5 to 203 constitute a DPCK domain; the sequence is AVGLTGGVAC…ARYRALASVF (199 aa). Residue 13-18 participates in ATP binding; the sequence is ACGKSL.

This sequence belongs to the CoaE family.

The protein localises to the cytoplasm. The enzyme catalyses 3'-dephospho-CoA + ATP = ADP + CoA + H(+). It functions in the pathway cofactor biosynthesis; coenzyme A biosynthesis; CoA from (R)-pantothenate: step 5/5. Functionally, catalyzes the phosphorylation of the 3'-hydroxyl group of dephosphocoenzyme A to form coenzyme A. In Xylella fastidiosa (strain Temecula1 / ATCC 700964), this protein is Dephospho-CoA kinase.